We begin with the raw amino-acid sequence, 932 residues long: Protocadherin gamma-A3 (932 aa).

The N-terminal stretch at 1–29 (MTNCLSFRNGRGLALLCALLGTLCETGSG) is a signal peptide. Cadherin domains lie at 30–133 (QIRY…APNF), 134–242 (PTEE…PPMF), 243–347 (TQPE…APEI), 348–452 (TITS…PPTF), 453–562 (PHLS…APEI), and 570–682 (DGST…EPSA). The Extracellular segment spans residues 30-692 (QIRYSVSEEL…KPNDSDLTLY (663 aa)). N-linked (GlcNAc...) asparagine glycosylation is found at Asn-265, Asn-419, and Asn-545. A glycan (N-linked (GlcNAc...) asparagine) is linked at Asn-685. A helical transmembrane segment spans residues 693 to 713 (LVVAVAAVSCVFLAFVIVLLA). Residues 714 to 932 (LRLRRWHKSR…KKKSGKKEKK (219 aa)) lie on the Cytoplasmic side of the membrane. Disordered stretches follow at residues 805 to 841 (NLLQ…WPNN) and 902 to 932 (ATLT…KEKK). The segment covering 922–932 (NKKKSGKKEKK) has biased composition (basic residues).

It is found in the cell membrane. Functionally, potential calcium-dependent cell-adhesion protein. May be involved in the establishment and maintenance of specific neuronal connections in the brain. The polypeptide is Protocadherin gamma-A3 (PCDHGA3) (Homo sapiens (Human)).